The chain runs to 459 residues: MLRWLIGGGREPQGLAEKSPLQTIGEEQTQNPYTELLVLKAHHDIVRFLVQLDDYRFASAGDDGIVVVWNAQTGEKLLELNGHTQKITAIITFPSLESCEEKNQLILTASADRTVIVWDGDTTRQVQRISCFQSTVKCLTVLQRLDVWLSGGNDLCVWNRKLDLLCKTSHLSDTGISALVEIPKNCVVAAVGKELIIFRLVAPTEGSLEWDILEVKRLLDHQDNILSLINVNDLSFVTGSHVGELIIWDALDWTMQAYERNFWDPSPQLDTQQEIKLCQKSNDISIHHFTCDEENVFAAVGRGLYVYSLQMKRVIACQKTAHDSNVLHVARLPNRQLISCSEDGSVRIWELREKQQLAAEPVPTGFFNMWGFGRVSKQASQPVKKQQENATSCSLELIGDLIGHSSSVEMFLYFEDHGLVTCSADHLIILWKNGERESGLRSLRLFQKLEENGDLYLAV.

WD repeat units lie at residues 40 to 79, 82 to 128, 131 to 168, 220 to 258, 321 to 359, and 403 to 441; these read KAHHDIVRFLVQLDDYRFASAGDDGIVVVWNAQTGEKLLE, GHTQ…QVQR, CFQSTVKCLTVLQRLDVWLSGGNDLCVWNRKLDLLCKT, DHQDNILSLINVNDLSFVTGSHVGELIIWDALDWTMQAY, AHDSNVLHVARLPNRQLISCSEDGSVRIWELREKQQLAA, and GHSSSVEMFLYFEDHGLVTCSADHLIILWKNGERESGLR.

As to quaternary structure, component of the C9orf72-SMCR8 complex, at least composed of C9orf72, SMCR8 and WDR41. The complex is formed of two protomers, each individually consisting of one molecule each of C9orf72, SMCR8 and WDR41. The protomers homodimerize via an interaction between C9orf72 (via C-terminus) and SMCR8 (via N-terminus). Within each protomer SMCR8 (via DENN domain) acts as a bridging protein between WDR41 (via C-terminus and N-terminus) and C9orf72 (via C-terminus). The C9orf72-SMCR8 complex associates with the ULK1/ATG1 kinase complex.

Its subcellular location is the cytoplasm. Functionally, non-catalytic component of the C9orf72-SMCR8 complex, a complex that has guanine nucleotide exchange factor (GEF) activity and regulates autophagy. The C9orf72-SMCR8 complex promotes the exchange of GDP to GTP, converting inactive GDP-bound RAB8A and RAB39B into their active GTP-bound form, thereby promoting autophagosome maturation. As part of the C9orf72-SMCR8 complex, stimulates RAB8A and RAB11A GTPase activity in vitro, however WDR42 is shown not be an essential complex component for this function. The C9orf72-SMCR8 complex also acts as a negative regulator of autophagy initiation by interacting with the ULK1/ATG1 kinase complex and inhibiting its protein kinase activity. The chain is WD repeat-containing protein 41 from Homo sapiens (Human).